A 260-amino-acid chain; its full sequence is Ribonuclease HII (260 aa).

Positions 75–260 (ELIAGVDEVG…FEPIKSIIKK (186 aa)) constitute an RNase H type-2 domain. Positions 81, 82, and 173 each coordinate a divalent metal cation.

The protein belongs to the RNase HII family. Mn(2+) is required as a cofactor. Mg(2+) serves as cofactor.

The protein localises to the cytoplasm. It carries out the reaction Endonucleolytic cleavage to 5'-phosphomonoester.. Its function is as follows. Endonuclease that specifically degrades the RNA of RNA-DNA hybrids. The chain is Ribonuclease HII from Streptococcus thermophilus (strain CNRZ 1066).